Here is a 330-residue protein sequence, read N- to C-terminus: Aspartate--ammonia ligase (330 aa).

The protein belongs to the class-II aminoacyl-tRNA synthetase family. AsnA subfamily.

The protein localises to the cytoplasm. It carries out the reaction L-aspartate + NH4(+) + ATP = L-asparagine + AMP + diphosphate + H(+). Its pathway is amino-acid biosynthesis; L-asparagine biosynthesis; L-asparagine from L-aspartate (ammonia route): step 1/1. The sequence is that of Aspartate--ammonia ligase from Escherichia coli O139:H28 (strain E24377A / ETEC).